A 245-amino-acid polypeptide reads, in one-letter code: Probable GTP-binding protein EngB (245 aa).

One can recognise an EngB-type G domain in the interval 46 to 223 (DVPEIAFVGR…AQHLWDWAHP (178 aa)). GTP is bound by residues 54 to 61 (GRSNAGKS), 81 to 85 (GRTQS), 103 to 106 (DLPG), 173 to 176 (TKSD), and 202 to 204 (FSS). The Mg(2+) site is built by Ser-61 and Thr-83. The interval 219–245 (DWAHPPEKPAKKPKAEPAAEAATGDEG) is disordered. Over residues 222 to 235 (HPPEKPAKKPKAEP) the composition is skewed to basic and acidic residues. Low complexity predominate over residues 236-245 (AAEAATGDEG).

It belongs to the TRAFAC class TrmE-Era-EngA-EngB-Septin-like GTPase superfamily. EngB GTPase family. Mg(2+) is required as a cofactor.

Its function is as follows. Necessary for normal cell division and for the maintenance of normal septation. This is Probable GTP-binding protein EngB from Polaromonas sp. (strain JS666 / ATCC BAA-500).